A 574-amino-acid polypeptide reads, in one-letter code: Proline--tRNA ligase (574 aa).

Belongs to the class-II aminoacyl-tRNA synthetase family. ProS type 1 subfamily. In terms of assembly, homodimer.

The protein localises to the cytoplasm. The enzyme catalyses tRNA(Pro) + L-proline + ATP = L-prolyl-tRNA(Pro) + AMP + diphosphate. Functionally, catalyzes the attachment of proline to tRNA(Pro) in a two-step reaction: proline is first activated by ATP to form Pro-AMP and then transferred to the acceptor end of tRNA(Pro). As ProRS can inadvertently accommodate and process non-cognate amino acids such as alanine and cysteine, to avoid such errors it has two additional distinct editing activities against alanine. One activity is designated as 'pretransfer' editing and involves the tRNA(Pro)-independent hydrolysis of activated Ala-AMP. The other activity is designated 'posttransfer' editing and involves deacylation of mischarged Ala-tRNA(Pro). The misacylated Cys-tRNA(Pro) is not edited by ProRS. The protein is Proline--tRNA ligase of Thioalkalivibrio sulfidiphilus (strain HL-EbGR7).